The chain runs to 220 residues: Putative threonylcarbamoyl-AMP synthase (220 aa).

One can recognise a YrdC-like domain in the interval 17–202 (ARGIASAVAA…TPRILRAGPV (186 aa)).

The protein belongs to the SUA5 family.

Its subcellular location is the cytoplasm. The enzyme catalyses L-threonine + hydrogencarbonate + ATP = L-threonylcarbamoyladenylate + diphosphate + H2O. Required for the formation of a threonylcarbamoyl group on adenosine at position 37 (t(6)A37) in tRNAs that read codons beginning with adenine. Catalyzes the conversion of L-threonine, HCO(3)(-)/CO(2) and ATP to give threonylcarbamoyl-AMP (TC-AMP) as the acyladenylate intermediate, with the release of diphosphate. The chain is Putative threonylcarbamoyl-AMP synthase from Mycobacterium leprae (strain TN).